The primary structure comprises 654 residues: tRNA 5-methylaminomethyl-2-thiouridine biosynthesis bifunctional protein MnmC (654 aa).

The segment at 1–235 (MSDFQHAQLD…KREMLGGTYQ (235 aa)) is tRNA (mnm(5)s(2)U34)-methyltransferase. Residues 261–654 (VGGGLAGCAS…LRDLVRGQRG (394 aa)) are FAD-dependent cmnm(5)s(2)U34 oxidoreductase.

In the N-terminal section; belongs to the methyltransferase superfamily. tRNA (mnm(5)s(2)U34)-methyltransferase family. The protein in the C-terminal section; belongs to the DAO family. FAD is required as a cofactor.

It is found in the cytoplasm. The catalysed reaction is 5-aminomethyl-2-thiouridine(34) in tRNA + S-adenosyl-L-methionine = 5-methylaminomethyl-2-thiouridine(34) in tRNA + S-adenosyl-L-homocysteine + H(+). Functionally, catalyzes the last two steps in the biosynthesis of 5-methylaminomethyl-2-thiouridine (mnm(5)s(2)U) at the wobble position (U34) in tRNA. Catalyzes the FAD-dependent demodification of cmnm(5)s(2)U34 to nm(5)s(2)U34, followed by the transfer of a methyl group from S-adenosyl-L-methionine to nm(5)s(2)U34, to form mnm(5)s(2)U34. The polypeptide is tRNA 5-methylaminomethyl-2-thiouridine biosynthesis bifunctional protein MnmC (Pseudomonas aeruginosa (strain UCBPP-PA14)).